The primary structure comprises 420 residues: MTMIFDKGNVEDFDKELWDAIHAEEERQEHHIELIASENMVSKAVMAAQGSVLTNKYAESYPGNRYYGGTECVDIVETLAIERAKKLFGAAFANVQAHSGSQANAAAYMALIEAGDTVLGMDLAAGGHLTHGSPVNFSGKTYHFVGYSVDADTETLNYEAILEQAKAVQPKLIVAGASAYSRSIDFEKFRAIADHVGAYLMVDMAHIAGLVAAGVHPSPVPYAHIVTSTTHKTLRGPRGGLILTNDEALAKKINSAVFPGLQGGPLEHVIAAKAVAFKEALDPAFKDYAQAIIDNTAAMAAVFAQDDRFRLISGGTDNHVFLVDVTKVIANGKLAQNLLDEVNITLNKNAIPFETLSPFKTSGIRIGCAAITSRGMSVKESQTIARLIIKALVNHDQETILEEVRQEVRQLTDAFPLYKK.

Residues leucine 123 and 127–129 (GHL) contribute to the (6S)-5,6,7,8-tetrahydrofolate site. The residue at position 232 (lysine 232) is an N6-(pyridoxal phosphate)lysine. 357 to 359 (SPF) serves as a coordination point for (6S)-5,6,7,8-tetrahydrofolate.

The protein belongs to the SHMT family. Homodimer. It depends on pyridoxal 5'-phosphate as a cofactor.

Its subcellular location is the cytoplasm. The enzyme catalyses (6R)-5,10-methylene-5,6,7,8-tetrahydrofolate + glycine + H2O = (6S)-5,6,7,8-tetrahydrofolate + L-serine. It functions in the pathway one-carbon metabolism; tetrahydrofolate interconversion. The protein operates within amino-acid biosynthesis; glycine biosynthesis; glycine from L-serine: step 1/1. Its function is as follows. Catalyzes the reversible interconversion of serine and glycine with tetrahydrofolate (THF) serving as the one-carbon carrier. This reaction serves as the major source of one-carbon groups required for the biosynthesis of purines, thymidylate, methionine, and other important biomolecules. Also exhibits THF-independent aldolase activity toward beta-hydroxyamino acids, producing glycine and aldehydes, via a retro-aldol mechanism. The protein is Serine hydroxymethyltransferase of Streptococcus pyogenes serotype M4 (strain MGAS10750).